We begin with the raw amino-acid sequence, 180 residues long: Putative adenylate kinase (180 aa).

5 residues coordinate ATP: glycine 10, glycine 12, lysine 13, threonine 14, and threonine 15. The tract at residues 30–50 (SVKELALSRGIGERVSDEIEI) is NMP. The tract at residues 99-109 (ARGYSKKKLAE) is LID. ATP-binding residues include arginine 100 and lysine 138.

The protein belongs to the adenylate kinase family. AK6 subfamily. As to quaternary structure, interacts with uS11. Not a structural component of 40S pre-ribosomes, but transiently interacts with them by binding to uS11.

It carries out the reaction AMP + ATP = 2 ADP. The catalysed reaction is ATP + H2O = ADP + phosphate + H(+). In terms of biological role, broad-specificity nucleoside monophosphate (NMP) kinase that catalyzes the reversible transfer of the terminal phosphate group between nucleoside triphosphates and monophosphates. Also has ATPase activity. Involved in the late maturation steps of the 30S ribosomal particles, specifically 16S rRNA maturation. While NMP activity is not required for ribosome maturation, ATPase activity is. Associates transiently with small ribosomal subunit protein uS11. ATP hydrolysis breaks the interaction with uS11. May temporarily remove uS11 from the ribosome to enable a conformational change of the ribosomal RNA that is needed for the final maturation step of the small ribosomal subunit. The polypeptide is Putative adenylate kinase (Thermococcus onnurineus (strain NA1)).